A 235-amino-acid chain; its full sequence is Sugar fermentation stimulation protein homolog (235 aa).

The protein belongs to the SfsA family.

This chain is Sugar fermentation stimulation protein homolog, found in Serratia proteamaculans (strain 568).